Here is a 334-residue protein sequence, read N- to C-terminus: Mevalonate kinase (334 aa).

110–120 is a binding site for ATP; the sequence is PVGAGLGSSAA. Asp161 functions as the Proton acceptor in the catalytic mechanism.

It belongs to the GHMP kinase family. Mevalonate kinase subfamily. Homodimer. The cofactor is Mg(2+).

Its subcellular location is the cytoplasm. The catalysed reaction is (R)-mevalonate + ATP = (R)-5-phosphomevalonate + ADP + H(+). It participates in isoprenoid biosynthesis; isopentenyl diphosphate biosynthesis via mevalonate pathway; isopentenyl diphosphate from (R)-mevalonate: step 1/3. Functionally, catalyzes the phosphorylation of (R)-mevalonate (MVA) to (R)-mevalonate 5-phosphate (MVAP). Functions in the mevalonate (MVA) pathway leading to isopentenyl diphosphate (IPP), a key precursor for the biosynthesis of isoprenoid compounds such as archaeal membrane lipids. The protein is Mevalonate kinase of Pyrococcus furiosus (strain ATCC 43587 / DSM 3638 / JCM 8422 / Vc1).